A 244-amino-acid polypeptide reads, in one-letter code: tRNA1(Val) (adenine(37)-N6)-methyltransferase (244 aa).

Belongs to the methyltransferase superfamily. tRNA (adenine-N(6)-)-methyltransferase family.

The protein resides in the cytoplasm. The enzyme catalyses adenosine(37) in tRNA1(Val) + S-adenosyl-L-methionine = N(6)-methyladenosine(37) in tRNA1(Val) + S-adenosyl-L-homocysteine + H(+). Specifically methylates the adenine in position 37 of tRNA(1)(Val) (anticodon cmo5UAC). This chain is tRNA1(Val) (adenine(37)-N6)-methyltransferase, found in Shewanella sediminis (strain HAW-EB3).